Here is a 320-residue protein sequence, read N- to C-terminus: o-succinylbenzoate synthase (320 aa).

Lys133 (proton donor) is an active-site residue. Residues Asp161, Glu190, and Asp213 each coordinate Mg(2+). Lys235 (proton acceptor) is an active-site residue.

It belongs to the mandelate racemase/muconate lactonizing enzyme family. MenC type 1 subfamily. A divalent metal cation is required as a cofactor.

It carries out the reaction (1R,6R)-6-hydroxy-2-succinyl-cyclohexa-2,4-diene-1-carboxylate = 2-succinylbenzoate + H2O. It participates in quinol/quinone metabolism; 1,4-dihydroxy-2-naphthoate biosynthesis; 1,4-dihydroxy-2-naphthoate from chorismate: step 4/7. Its pathway is quinol/quinone metabolism; menaquinone biosynthesis. In terms of biological role, converts 2-succinyl-6-hydroxy-2,4-cyclohexadiene-1-carboxylate (SHCHC) to 2-succinylbenzoate (OSB). This is o-succinylbenzoate synthase from Salmonella paratyphi B (strain ATCC BAA-1250 / SPB7).